Reading from the N-terminus, the 168-residue chain is MSNLLNKFADKLHGNDHDERYEDDNDDQTRQQRHEKHQQREFRNQGSKADPYGEENQGNFPQRQQPQSNLGGNTQFGGNDFQQQTTDYTAGTGGGTYTQTYRETNTQGQLDDDEDDDFLTSGQQQKQGRTRGAQSNRYQSSNIGSGRRDLSGSGNDEYDDDSGNQGVW.

The tract at residues 1 to 168 is disordered; sequence MSNLLNKFAD…DDDSGNQGVW (168 aa). 2 stretches are compositionally biased toward basic and acidic residues: residues 8–20 and 27–43; these read FADKLHGNDHDER and DQTRQQRHEKHQQREFR. Polar residues-rich tracts occupy residues 56-81 and 120-144; these read NQGNFPQRQQPQSNLGGNTQFGGNDF and TSGQQQKQGRTRGAQSNRYQSSNIG.

Its subcellular location is the cytoplasm. The protein is Protein GRE1 (GRE1) of Saccharomyces cerevisiae (strain ATCC 204508 / S288c) (Baker's yeast).